The sequence spans 388 residues: Cobalt-precorrin-5B C(1)-methyltransferase (388 aa).

It belongs to the CbiD family.

It carries out the reaction Co-precorrin-5B + S-adenosyl-L-methionine = Co-precorrin-6A + S-adenosyl-L-homocysteine. The protein operates within cofactor biosynthesis; adenosylcobalamin biosynthesis; cob(II)yrinate a,c-diamide from sirohydrochlorin (anaerobic route): step 6/10. In terms of biological role, catalyzes the methylation of C-1 in cobalt-precorrin-5B to form cobalt-precorrin-6A. This is Cobalt-precorrin-5B C(1)-methyltransferase from Rubrobacter xylanophilus (strain DSM 9941 / JCM 11954 / NBRC 16129 / PRD-1).